A 151-amino-acid chain; its full sequence is Actin-depolymerizing factor 10 (151 aa).

Residues 15–149 (PAWIEVPEKS…DLEVLRGRAN (135 aa)) form the ADF-H domain.

Belongs to the actin-binding proteins ADF family.

Functionally, actin-depolymerizing protein. Severs actin filaments (F-actin) and binds to actin monomers. This chain is Actin-depolymerizing factor 10 (ADF10), found in Oryza sativa subsp. japonica (Rice).